Reading from the N-terminus, the 507-residue chain is ATP synthase subunit alpha, chloroplastic (507 aa).

Position 170–177 (170–177 (GDRQTGKT)) interacts with ATP.

It belongs to the ATPase alpha/beta chains family. As to quaternary structure, F-type ATPases have 2 components, CF(1) - the catalytic core - and CF(0) - the membrane proton channel. CF(1) has five subunits: alpha(3), beta(3), gamma(1), delta(1), epsilon(1). CF(0) has four main subunits: a, b, b' and c.

Its subcellular location is the plastid. The protein localises to the chloroplast thylakoid membrane. It carries out the reaction ATP + H2O + 4 H(+)(in) = ADP + phosphate + 5 H(+)(out). Functionally, produces ATP from ADP in the presence of a proton gradient across the membrane. The alpha chain is a regulatory subunit. This chain is ATP synthase subunit alpha, chloroplastic, found in Nicotiana tomentosiformis (Tobacco).